The primary structure comprises 2108 residues: Kinesin-like protein KIF26B (2108 aa).

Disordered stretches follow at residues 1-124 and 263-287; these read MNSV…PGSD and KHGS…PTHQ. Positions 40 to 50 are enriched in basic and acidic residues; the sequence is WYRKAYEESRA. Positions 58–98 are enriched in low complexity; it reads GAGSALGSSGTPSPGSGTSSPSSFTGSPGPASPGIGTSSPG. The span at 99 to 120 shows a compositional bias: gly residues; that stretch reads SLGGSPGFGTGSPGSGSGGGSS. The region spanning 450–801 is the Kinesin motor domain; the sequence is KVKVMLRICS…IQIASRVLRM (352 aa). Residue 546 to 553 participates in ATP binding; that stretch reads GHAKLGKS. 7 disordered regions span residues 805 to 825, 876 to 917, 937 to 1166, 1406 to 1504, 1519 to 1653, 1685 to 1799, and 1824 to 1974; these read KTKY…GRMR, SDKE…GKSE, DGSE…ESKK, EPEA…PVTD, GLAT…SSSK, AESL…ASKL, and RAGP…WVDG. Residues 1004–1046 show a composition bias toward low complexity; that stretch reads SHSPVPAAAPAHSPSPASPRSVPGSSSQHSASPLVQSPSLQSS. Basic and acidic residues predominate over residues 1424–1461; the sequence is RESKENSAKKEMKFEDPWLKREEEVKKETAHPNEEGMM. A compositionally biased stretch (low complexity) spans 1491–1500; it reads SSSSGEVSAS. 2 stretches are compositionally biased toward polar residues: residues 1521 to 1537 and 1611 to 1628; these read ATQS…SSSL and RASP…SPLN. Low complexity-rich tracts occupy residues 1713 to 1730 and 1751 to 1763; these read SAGT…AGQS and STTK…TKSL. Residues 1781 to 1795 are compositionally biased toward polar residues; the sequence is PWSTQSLSRNRSSGL. Positions 1824-1836 are enriched in low complexity; the sequence is RAGPEAEARGGAL. Threonine 1855 is modified (phosphothreonine). Polar residues-rich tracts occupy residues 1866-1875 and 1907-1925; these read GHGSDNSSVL and ATGS…SSSV. Residues 1930-1948 are compositionally biased toward basic residues; sequence RSLKTPKKRSNPGSQRRRL. Positions 1954-1968 are enriched in polar residues; the sequence is LDTSSPVRKPPNSTG. Phosphoserine is present on serine 1958.

The protein belongs to the TRAFAC class myosin-kinesin ATPase superfamily. Kinesin family. KIF26 subfamily. As to quaternary structure, interacts with MYH10. In terms of processing, phosphorylation at Thr-1855 and Ser-1958 by CDKs, mainly CDK2 and CDK5, enhances the interaction with NEDD4, polyubiquitination, and subsequent proteasomal degradation. Phosphorylation occurs upon loss of interaction with microtubules. Polyubiquitinated by NEDD4, resulting in proteasomal degradation.

It is found in the cytoplasm. Its subcellular location is the cytoskeleton. Its function is as follows. Essential for embryonic kidney development. Plays an important role in the compact adhesion between mesenchymal cells adjacent to the ureteric buds, possibly by interacting with MYH10. This could lead to the establishment of the basolateral integrity of the mesenchyme and the polarized expression of ITGA8, which maintains the GDNF expression required for further ureteric bud attraction. Although it seems to lack ATPase activity it is constitutively associated with microtubules. The protein is Kinesin-like protein KIF26B (KIF26B) of Homo sapiens (Human).